We begin with the raw amino-acid sequence, 137 residues long: Peptide methionine sulfoxide reductase MsrB (137 aa).

A MsrB domain is found at 7–129 (AEELKKKLSE…NSASLAFSDE (123 aa)). Residues C46, C49, C95, and C98 each coordinate Zn(2+). C118 serves as the catalytic Nucleophile.

The protein belongs to the MsrB Met sulfoxide reductase family. It depends on Zn(2+) as a cofactor.

The catalysed reaction is L-methionyl-[protein] + [thioredoxin]-disulfide + H2O = L-methionyl-(R)-S-oxide-[protein] + [thioredoxin]-dithiol. The chain is Peptide methionine sulfoxide reductase MsrB from Salmonella dublin (strain CT_02021853).